Consider the following 286-residue polypeptide: Glucose import system permease protein GlcT (286 aa).

6 helical membrane passes run 6–26, 71–91, 103–123, 154–174, 199–219, and 260–280; these read TIIL…LVIW, VILV…LYFL, IVIY…LWLF, LVLV…LAGF, ILIP…FLFS, and VATM…LTVI. Residues 63-275 enclose the ABC transmembrane type-1 domain; that stretch reads LLHSIELSVI…LIATIIIIPY (213 aa).

This sequence belongs to the binding-protein-dependent transport system permease family. As to quaternary structure, the complex is composed of two ATP-binding proteins (GlcV), two transmembrane proteins (GlcT and GlcU) and a solute-binding protein (GlcS).

The protein localises to the cell membrane. Functionally, part of the ABC transporter complex GlcSTUV involved in glucose uptake. Responsible for the translocation of the substrate across the membrane. The sequence is that of Glucose import system permease protein GlcT from Saccharolobus solfataricus (strain ATCC 35092 / DSM 1617 / JCM 11322 / P2) (Sulfolobus solfataricus).